Reading from the N-terminus, the 375-residue chain is Growth/differentiation factor 8 (375 aa).

The first 18 residues, 1–18 (MQRLQICVYIYLFVLIVA), serve as a signal peptide directing secretion. A propeptide spanning residues 19–266 (GPVDLSENSE…VTDTPKRSRR (248 aa)) is cleaved from the precursor. N-linked (GlcNAc...) asparagine glycosylation is present at Asn-71. Intrachain disulfides connect Cys-272–Cys-282, Cys-281–Cys-340, Cys-309–Cys-372, and Cys-313–Cys-374.

It belongs to the TGF-beta family. Homodimer; disulfide-linked. Interacts with WFIKKN2, leading to inhibit its activity. Interacts with FSTL3. Synthesized as large precursor molecule that undergoes proteolytic cleavage to generate an N-terminal propeptide and a disulfide linked C-terminal dimer, which is the biologically active molecule. The circulating form consists of a latent complex of the C-terminal dimer and other proteins, including its propeptide, which maintain the C-terminal dimer in a latent, inactive state. Ligand activation requires additional cleavage of the prodomain by a tolloid-like metalloproteinase.

The protein resides in the secreted. In terms of biological role, acts specifically as a negative regulator of skeletal muscle growth. This is Growth/differentiation factor 8 (MSTN) from Canis lupus familiaris (Dog).